Reading from the N-terminus, the 142-residue chain is MFQGASSLNLDGKGRLSVPTRHRDALVAMAQGQVTLTKHPHGCLMLFPRTEWLQFRERIAQLPMSAQWWKRIFLGNAMDVDMDATGRVLVSPELREAVGLTKEVVLLGMGNHFELWDKATYEAHEAKAMQEEMPAAFQDFAF.

2 consecutive SpoVT-AbrB domains span residues 5-51 (ASSL…PRTE) and 77-120 (AMDV…DKAT).

The protein belongs to the MraZ family. Forms oligomers.

It localises to the cytoplasm. It is found in the nucleoid. The chain is Transcriptional regulator MraZ from Delftia acidovorans (strain DSM 14801 / SPH-1).